A 208-amino-acid polypeptide reads, in one-letter code: MNRKQIAKGKLVRRFGINIFEQPKYDKILKKKPHPPGMHGKARKAKITEYGKQLIEKQKIKFTYGVSERQLPNTFKEAKKHHGVTGYNLLSILETIIDNIVYRAGFAFSRAHARLIVSHGIVILNGRRVTIPSIILRANDQILIQEIDSLKKLIGSNIEQTSAQRNLPTGIELNADYLNIKVKHAPSRDEIPTLANEQMVVEYYSKRA.

Residues Thr95 to Glu159 form the S4 RNA-binding domain.

The protein belongs to the universal ribosomal protein uS4 family. As to quaternary structure, part of the 30S ribosomal subunit. Contacts protein S5. The interaction surface between S4 and S5 is involved in control of translational fidelity.

Functionally, one of the primary rRNA binding proteins, it binds directly to 16S rRNA where it nucleates assembly of the body of the 30S subunit. In terms of biological role, with S5 and S12 plays an important role in translational accuracy. This chain is Small ribosomal subunit protein uS4, found in Borreliella afzelii (strain PKo) (Borrelia afzelii).